Reading from the N-terminus, the 57-residue chain is MAEPHPKVLNLTSSITPVESLTLICNLITSPHAGAPTRPVPTLGNFLSNEPTFLGCV.

This is an uncharacterized protein from Saccharomyces cerevisiae (strain ATCC 204508 / S288c) (Baker's yeast).